The primary structure comprises 369 residues: Septin-5 (369 aa).

Position 13 is a phosphothreonine (threonine 13). One can recognise a Septin-type G domain in the interval 41-314; that stretch reads KGFDFTLMVA…ENYRAHCIQQ (274 aa). The tract at residues 51 to 58 is G1 motif; that stretch reads GESGLGKS. Residues 51–58, threonine 85, and glycine 111 contribute to the GTP site; that span reads GESGLGKS. The interval 108–111 is G3 motif; the sequence is DTPG. At arginine 168 the chain carries Omega-N-methylarginine. Residues 189-192 form a G4 motif region; the sequence is AKAD. Residue 190-198 participates in GTP binding; sequence KADCLVPSE. At serine 225 the chain carries Phosphoserine. Residues glycine 248 and arginine 263 each contribute to the GTP site. The residue at position 327 (serine 327) is a Phosphoserine. Threonine 336 is modified (phosphothreonine). Residues 338-369 adopt a coiled-coil conformation; it reads DAETEKLIRMKDEELRRMQEMLQKMKQQMQDQ.

Belongs to the TRAFAC class TrmE-Era-EngA-EngB-Septin-like GTPase superfamily. Septin GTPase family. In terms of assembly, septins polymerize into heterooligomeric protein complexes that form filaments, and can associate with cellular membranes, actin filaments and microtubules. GTPase activity is required for filament formation. Interacts with SEPTIN2 and SEPTIN5. Interaction with SEPTIN4 not detected. In platelets, associated with a complex containing STX4. Interacts with PRKN; this interaction leads to SEPTIN5 ubiquitination and degradation. Interacts with DYRK1A. Interacts with STX1A; in the cerebellar cortex. Post-translationally, phosphorylated by DYRK1A.

The protein resides in the cytoplasm. It localises to the cytoskeleton. Its function is as follows. Filament-forming cytoskeletal GTPase. Involved in cytokinesis (Potential). May play a role in platelet secretion. The sequence is that of Septin-5 from Mus musculus (Mouse).